Here is a 247-residue protein sequence, read N- to C-terminus: MENFSLLSISGTRISSSALSTLPDIMSSRATSLPDIAKPVLPTEVPSPVQALPPQCPGGVLRHGVHNIVISPDCILGDAPNGEQLRWNCTIYRPWFSPYSYFLCKDKESHLETYSFSEVQRDEGQRDSCLPEDTADSVCSSSPSPENTCPREATKKSRPGPDTTDSITFQDILMASKWHPAQQNGYKCASCCRLYPTLHSLKSHIKRGFKEGFSCKVYYHKLKTLWYKEQKARPGDRLSLGSGQAFR.

Residues 125–164 (QRDSCLPEDTADSVCSSSPSPENTCPREATKKSRPGPDTT) form a disordered region. Residues 137 to 147 (SVCSSSPSPEN) are compositionally biased toward polar residues.

The protein localises to the nucleus membrane. In terms of biological role, plays a role in spermiogenesis and fertilization. This is Spermatogenesis-associated protein 46 (SPATA46) from Bos taurus (Bovine).